A 537-amino-acid polypeptide reads, in one-letter code: Ceramide kinase (537 aa).

Positions 1-115 (MGATGAAEPL…CPEEQLCHLW (115 aa)) are essential for enzyme activity. Residues 1–125 (MGATGAAEPL…LQTLREMLEK (125 aa)) are required for binding to sulfatide and phosphoinositides. The DAGKc domain maps to 128–278 (SRPKHLLVFI…MDVSSVHHNS (151 aa)). ATP-binding positions include 138-140 (NPF) and 170-174 (TEHAN). 195–198 (GGDG) is a substrate binding site. The active-site Proton donor/acceptor is D197. Residues E202, 239–241 (GST), R304, and R310 contribute to the ATP site. S340 and S408 each carry phosphoserine. Residue 502–504 (DGE) coordinates ATP.

The cofactor is Ca(2+). It depends on Mg(2+) as a cofactor. In terms of tissue distribution, high level expression in heart, brain, skeletal muscle, kidney and liver; moderate in peripheral blood leukocytes and thymus; very low in spleen, small intestine, placenta and lung.

The protein localises to the cytoplasm. Its subcellular location is the cell membrane. It carries out the reaction an N-acylsphing-4-enine + ATP = an N-acylsphing-4-enine 1-phosphate + ADP + H(+). The enzyme catalyses N-(hexanoyl)sphing-4-enine + ATP = N-hexanoylsphing-4-enine 1-phosphate + ADP + H(+). It catalyses the reaction N-(acetyl)-sphing-4-enine + ATP = N-(acetyl)-sphing-4-enine-1-phosphate + ADP + H(+). The catalysed reaction is N-hexadecanoylsphing-4-enine + ATP = N-(hexadecanoyl)-sphing-4-enine-1-phosphate + ADP + H(+). It carries out the reaction N-hexanoyl-(4R)-hydroxysphinganine + ATP = N-hexanoyl-(4R)-hydroxysphinganine-1-phosphate + ADP + H(+). Its activity is regulated as follows. Inhibited by sulfatide. Inhibited by sphinganine, sphingenine, and N,N-Dimethylsphingosine (DMS). Cardiolipin at 0.1 uM significantly increases activity, whereas at concentrations &gt;1 uM has an inhibitory effect. Functionally, catalyzes specifically the phosphorylation of ceramide to form ceramide 1-phosphate. Acts efficiently on natural and analog ceramides (C6, C8, C16 ceramides, and C8-dihydroceramide), to a lesser extent on C2-ceramide and C6-dihydroceramide, but not on other lipids, such as various sphingosines. Shows a greater preference for D-erythro isomer of ceramides. Binds phosphoinositides. In Homo sapiens (Human), this protein is Ceramide kinase (CERK).